The following is a 477-amino-acid chain: Glycogen synthase (477 aa).

Residue lysine 15 coordinates ADP-alpha-D-glucose.

It belongs to the glycosyltransferase 1 family. Bacterial/plant glycogen synthase subfamily.

It carries out the reaction [(1-&gt;4)-alpha-D-glucosyl](n) + ADP-alpha-D-glucose = [(1-&gt;4)-alpha-D-glucosyl](n+1) + ADP + H(+). It participates in glycan biosynthesis; glycogen biosynthesis. Functionally, synthesizes alpha-1,4-glucan chains using ADP-glucose. The protein is Glycogen synthase of Myxococcus xanthus (strain DK1622).